The primary structure comprises 312 residues: Olfactory receptor 2L8 (312 aa).

Residues 1–24 (MENYNQTSTDFILLGLFPPSRIDL) lie on the Extracellular side of the membrane. An N-linked (GlcNAc...) asparagine glycan is attached at asparagine 5. Residues 25–48 (FFFILIVFIFLMALIGNLSMILLI) traverse the membrane as a helical segment. The Cytoplasmic segment spans residues 49-56 (FLDTHLHT). A helical transmembrane segment spans residues 57–78 (PMYFLLSQLSLIDLNYISTIVP). Residues 79–99 (KMASDFLHGNKSISFTGCGIQ) are Extracellular-facing. Asparagine 88 carries N-linked (GlcNAc...) asparagine glycosylation. Cysteine 96 and cysteine 188 are oxidised to a cystine. Residues 100–119 (SFFFLALGGAEALLLASMAY) form a helical membrane-spanning segment. Residues 120-138 (DRYIAICFPLHYLIRMSKR) are Cytoplasmic-facing. A helical transmembrane segment spans residues 139–157 (VCVLMITGSWIIGSINACA). At 158–194 (HTVYVLHIPYCRSRAINHFFCDVPAMVTLACMDTWVY) the chain is on the extracellular side. The chain crosses the membrane as a helical span at residues 195–218 (EGTVFLSATIFLVFPFIGISCSYG). Residues 219–235 (QVLFAVYHMKSAEGRKK) lie on the Cytoplasmic side of the membrane. Residues 236–258 (AYLTCSTHLTVVTFYYAPFVYTY) traverse the membrane as a helical segment. The Extracellular portion of the chain corresponds to 259 to 271 (LRPRSLRSPTEDK). Residues 272-291 (VLAVFYTILTPMLNPIIYSL) form a helical membrane-spanning segment. At 292-312 (RNKEVMGALTRVSQRICSVKM) the chain is on the cytoplasmic side.

Belongs to the G-protein coupled receptor 1 family.

The protein localises to the cell membrane. In terms of biological role, odorant receptor. This Homo sapiens (Human) protein is Olfactory receptor 2L8 (OR2L8).